The chain runs to 494 residues: Zinc metalloproteinase/disintegrin (494 aa).

Positions 1-20 (MIQVLLVTICLAVFPFQGSS) are cleaved as a signal peptide. Positions 21–193 (KTLKSGNVND…KKASHLVATS (173 aa)) are excised as a propeptide. In terms of domain architecture, Peptidase M12B spans 201–396 (RYVQLVIVAD…HNPPCILNQA (196 aa)). 3 cysteine pairs are disulfide-bonded: Cys311–Cys391, Cys351–Cys375, and Cys353–Cys358. His336 provides a ligand contact to Zn(2+). Glu337 is an active-site residue. Zn(2+)-binding residues include His340 and His346. Residues 410 to 431 (ELLQNSVNPCYDPVTCQPKEKE) constitute a propeptide that is removed on maturation. Positions 417–478 (NPCYDPVTCQ…DCPRNPYKGE (62 aa)) constitute a Disintegrin domain. Intrachain disulfides connect Cys433–Cys442, Cys438–Cys463, Cys439–Cys468, and Cys451–Cys470. Residues 455-457 (RGD) carry the Cell attachment site motif. A propeptide spanning residues 482 to 494 (MEWPAPAKGSVLM) is cleaved from the precursor.

Belongs to the venom metalloproteinase (M12B) family. P-II subfamily. P-IIa sub-subfamily. As to quaternary structure, monomer (disintegrin). Expressed by the venom gland.

The protein resides in the secreted. Impairs hemostasis in the envenomed animal. Functionally, inhibits ADP-induced platelet aggregation (IC(50)=168 nM). Inhibits alpha-5/beta-1 (ITGA5/ITGB1) integrin and induces the expression of a ligand-induced binding site epitope on beta-1 integrin subunit. Has a direct chemotactic stimulus on human neutrophils in vitro. This is Zinc metalloproteinase/disintegrin from Echis ocellatus (Ocellated saw-scaled viper).